The sequence spans 58 residues: Large ribosomal subunit protein eL24 (58 aa).

Residues Cys-6, Cys-9, Cys-32, and Cys-36 each coordinate Zn(2+). The C4-type zinc finger occupies 6–36 (CSFCGAEIPPGYGIMYVRNDGTIQRYCSRKC).

It belongs to the eukaryotic ribosomal protein eL24 family. Part of the 50S ribosomal subunit. Forms a cluster with proteins L3 and L14. The cofactor is Zn(2+).

Binds to the 23S rRNA. This chain is Large ribosomal subunit protein eL24, found in Pyrobaculum neutrophilum (strain DSM 2338 / JCM 9278 / NBRC 100436 / V24Sta) (Thermoproteus neutrophilus).